A 333-amino-acid polypeptide reads, in one-letter code: Glycerol-3-phosphate dehydrogenase [NAD(P)+] (333 aa).

Residues tryptophan 13, lysine 33, and lysine 108 each coordinate NADPH. Residues lysine 108 and glycine 138 each contribute to the sn-glycerol 3-phosphate site. Serine 142 is a binding site for NADPH. Sn-glycerol 3-phosphate is bound by residues lysine 193, aspartate 246, serine 256, arginine 257, and asparagine 258. Residue lysine 193 is the Proton acceptor of the active site. Position 257 (arginine 257) interacts with NADPH. NADPH-binding residues include valine 281 and glutamate 283.

Belongs to the NAD-dependent glycerol-3-phosphate dehydrogenase family.

The protein localises to the cytoplasm. It carries out the reaction sn-glycerol 3-phosphate + NAD(+) = dihydroxyacetone phosphate + NADH + H(+). It catalyses the reaction sn-glycerol 3-phosphate + NADP(+) = dihydroxyacetone phosphate + NADPH + H(+). It participates in membrane lipid metabolism; glycerophospholipid metabolism. Its function is as follows. Catalyzes the reduction of the glycolytic intermediate dihydroxyacetone phosphate (DHAP) to sn-glycerol 3-phosphate (G3P), the key precursor for phospholipid synthesis. The polypeptide is Glycerol-3-phosphate dehydrogenase [NAD(P)+] (Bifidobacterium longum (strain DJO10A)).